A 456-amino-acid chain; its full sequence is GTPase Der (456 aa).

EngA-type G domains follow at residues 4–169 and 177–352; these read PIVA…PAVE and IKVA…ESHK. Residues 10-17, 57-61, 120-123, 183-190, 230-234, and 295-298 contribute to the GTP site; these read GRPNVGKS, DTGGL, NKCE, DTAGI, and NKWD. The region spanning 353–438 is the KH-like domain; it reads RRVSTSVINE…PIILLWRSKK (86 aa).

Belongs to the TRAFAC class TrmE-Era-EngA-EngB-Septin-like GTPase superfamily. EngA (Der) GTPase family. As to quaternary structure, associates with the 50S ribosomal subunit.

Functionally, GTPase that plays an essential role in the late steps of ribosome biogenesis. In Nostoc punctiforme (strain ATCC 29133 / PCC 73102), this protein is GTPase Der.